The sequence spans 88 residues: Small ribosomal subunit protein uS15c (88 aa).

Belongs to the universal ribosomal protein uS15 family. Part of the 30S ribosomal subunit.

Its subcellular location is the plastid. The protein resides in the chloroplast. The protein is Small ribosomal subunit protein uS15c (rps15) of Aethionema grandiflorum (Persian stone-cress).